A 295-amino-acid polypeptide reads, in one-letter code: Nuclear transcription factor Y subunit A-2 (295 aa).

The Subunit association domain (SAD) signature appears at 139–165 (YVNSKQYHGIIRRRQSRAKAAAVLDQK). The NFYA/HAP2-type DNA-binding region spans 173 to 198 (KPYMHHSRHLHALRRPRGSGGRFLNT). Positions 178 to 189 (HSRHLHALRRPR) are enriched in basic residues. The tract at residues 178–244 (HSRHLHALRR…VVHPENGTMN (67 aa)) is disordered. The segment covering 197–209 (NTKSQNLENSGTN) has biased composition (polar residues). The segment covering 216 to 233 (SMQIQSQPKPQQSNSQNS) has biased composition (low complexity).

This sequence belongs to the NFYA/HAP2 subunit family. In terms of assembly, heterotrimeric transcription factor composed of three components, NF-YA, NF-YB and NF-YC. NF-YB and NF-YC must interact and dimerize for NF-YA association and DNA binding. Component of a heat stress-inducible transcriptional complex with NF-YA and NF-YB subunits made, at least, of NFYA2, NFYB3 and DPB3-1 in cooperation with DREB2A. As to expression, ubiquitous. Expressed in seedlings, roots, petioles, hypocotyls, reproductive organ tissues and leaves.

The protein resides in the nucleus. Functionally, stimulates the transcription of various genes by recognizing and binding to a CCAAT motif in promoters. Promotes the expression of heat stress-inducible genes by contributing to the formation of a heat stress-specific transcriptional complex with NF-Y subunits (e.g. DPB3-1, NF-YA2 and NF-YB3) and DREB2A at the promoter of target genes, thus promoting heat tolerance. This chain is Nuclear transcription factor Y subunit A-2, found in Arabidopsis thaliana (Mouse-ear cress).